We begin with the raw amino-acid sequence, 118 residues long: Small ribosomal subunit protein uS13 (118 aa).

The disordered stretch occupies residues 92–118; it reads RKGLPVRGQRTKTNARTRKGPRKPIRK.

It belongs to the universal ribosomal protein uS13 family. Part of the 30S ribosomal subunit. Forms a loose heterodimer with protein S19. Forms two bridges to the 50S subunit in the 70S ribosome.

Located at the top of the head of the 30S subunit, it contacts several helices of the 16S rRNA. In the 70S ribosome it contacts the 23S rRNA (bridge B1a) and protein L5 of the 50S subunit (bridge B1b), connecting the 2 subunits; these bridges are implicated in subunit movement. Contacts the tRNAs in the A and P-sites. This is Small ribosomal subunit protein uS13 from Pseudomonas putida (strain ATCC 700007 / DSM 6899 / JCM 31910 / BCRC 17059 / LMG 24140 / F1).